The chain runs to 433 residues: Urokinase-type plasminogen activator (433 aa).

Residues 1-20 form the signal peptide; sequence MRVLLACLLVCALVVSDSDG. The region spanning 29 to 65 is the EGF-like domain; the sequence is GESNCGCLNGGKCVTYKYFSNIQRCSCPKKFQGEHCE. Intrachain disulfides connect Cys33-Cys41, Cys35-Cys53, Cys55-Cys64, Cys72-Cys153, Cys93-Cys135, and Cys124-Cys148. The interval 36-59 is binds urokinase plasminogen activator surface receptor; that stretch reads LNGGKCVTYKYFSNIQRCSCPKKF. The 82-residue stretch at 72-153 folds into the Kringle domain; that stretch reads CYQGNGHSYR…FVQFCMVQDC (82 aa). The interval 154–180 is connecting peptide; it reads SVGKSPSSPREKEEFQCGQKALRPRFK. Ser160 is subject to Phosphoserine. Intrachain disulfides connect Cys170–Cys301, Cys211–Cys227, Cys219–Cys290, Cys315–Cys384, Cys347–Cys363, and Cys374–Cys402. The Peptidase S1 domain occupies 181 to 426; the sequence is IVGGQVTNAE…FLPWINTHTR (246 aa). Catalysis depends on charge relay system residues His226 and Asp277. Catalysis depends on Ser378, which acts as the Charge relay system.

It belongs to the peptidase S1 family. Found in high and low molecular mass forms. Each consists of two chains, A and B. The high molecular mass form contains a long chain A which is cleaved to yield a short chain A. Forms heterodimer with SERPINA5. Binds LRP1B; binding is followed by internalization and degradation. Interacts with MRC2. Interacts with PLAUR. In complex with SERPINE1, interacts with PLAUR/uPAR. Interacts with SORL1 and LRP1, either alone or in complex with SERPINE1; these interactions are abolished in the presence of LRPAP1/RAP. The ternary complex composed of PLAUR-PLAU-PAI1 also interacts with SORLA. Produced as an inactive single-chain protein (pro-uPA or sc-uPA), is processed into the active disulfide-linked two-chain form of PLAU/uPA by a proteolytic event mediated, at least, by TMPRSS4.

It localises to the secreted. The enzyme catalyses Specific cleavage of Arg-|-Val bond in plasminogen to form plasmin.. With respect to regulation, inhibited by SERPINA5. Inhibited by SERPINE1. Specifically cleaves the zymogen plasminogen to form the active enzyme plasmin. This is Urokinase-type plasminogen activator (PLAU) from Bos taurus (Bovine).